Consider the following 441-residue polypeptide: L-seryl-tRNA(Sec) selenium transferase (441 aa).

Position 283 is an N6-(pyridoxal phosphate)lysine (lysine 283).

This sequence belongs to the SelA family. Pyridoxal 5'-phosphate is required as a cofactor.

Its subcellular location is the cytoplasm. The catalysed reaction is L-seryl-tRNA(Sec) + selenophosphate + H(+) = L-selenocysteinyl-tRNA(Sec) + phosphate. It participates in aminoacyl-tRNA biosynthesis; selenocysteinyl-tRNA(Sec) biosynthesis; selenocysteinyl-tRNA(Sec) from L-seryl-tRNA(Sec) (bacterial route): step 1/1. In terms of biological role, converts seryl-tRNA(Sec) to selenocysteinyl-tRNA(Sec) required for selenoprotein biosynthesis. This Campylobacter concisus (strain 13826) protein is L-seryl-tRNA(Sec) selenium transferase.